The chain runs to 391 residues: UPF0229 protein BCG9842_B4751 (391 aa).

Over residues 1–16 (MGEENQPNYTISQENW) the composition is skewed to polar residues. Disordered stretches follow at residues 1–31 (MGEE…RHQE) and 80–117 (HVGQ…GDAA). Residues 21-31 (KGYDDQQRHQE) show a composition bias toward basic and acidic residues. A compositionally biased stretch (gly residues) spans 98-115 (GSGGQKQKGPGKGQGAGD).

The protein belongs to the UPF0229 family.

This is UPF0229 protein BCG9842_B4751 from Bacillus cereus (strain G9842).